Reading from the N-terminus, the 505-residue chain is 2,3-bisphosphoglycerate-independent phosphoglycerate mutase (505 aa).

Positions 12 and 62 each coordinate Mn(2+). The active-site Phosphoserine intermediate is Ser62. Residues His123, 153-154, Arg185, Arg191, 257-260, and Lys330 each bind substrate; these read RD and RPDR. Mn(2+)-binding residues include Asp397, His401, Asp438, His439, and His456.

It belongs to the BPG-independent phosphoglycerate mutase family. As to quaternary structure, monomer. Requires Mn(2+) as cofactor.

The catalysed reaction is (2R)-2-phosphoglycerate = (2R)-3-phosphoglycerate. Its pathway is carbohydrate degradation; glycolysis; pyruvate from D-glyceraldehyde 3-phosphate: step 3/5. Catalyzes the interconversion of 2-phosphoglycerate and 3-phosphoglycerate. This Staphylococcus aureus (strain MRSA252) protein is 2,3-bisphosphoglycerate-independent phosphoglycerate mutase.